A 914-amino-acid polypeptide reads, in one-letter code: Isoleucine--tRNA ligase (914 aa).

Residues 64 to 74 carry the 'HIGH' region motif; it reads PYANGNFHLGH. Glu-557 is an L-isoleucyl-5'-AMP binding site. The 'KMSKS' region motif lies at 598–602; it reads AMSKS. Residue Lys-601 coordinates ATP. Cys-889, Cys-892, Cys-906, and Cys-909 together coordinate Zn(2+).

Belongs to the class-I aminoacyl-tRNA synthetase family. IleS type 1 subfamily. In terms of assembly, monomer. Requires Zn(2+) as cofactor.

It is found in the cytoplasm. It catalyses the reaction tRNA(Ile) + L-isoleucine + ATP = L-isoleucyl-tRNA(Ile) + AMP + diphosphate. Its function is as follows. Catalyzes the attachment of isoleucine to tRNA(Ile). As IleRS can inadvertently accommodate and process structurally similar amino acids such as valine, to avoid such errors it has two additional distinct tRNA(Ile)-dependent editing activities. One activity is designated as 'pretransfer' editing and involves the hydrolysis of activated Val-AMP. The other activity is designated 'posttransfer' editing and involves deacylation of mischarged Val-tRNA(Ile). The protein is Isoleucine--tRNA ligase of Leptospira borgpetersenii serovar Hardjo-bovis (strain JB197).